We begin with the raw amino-acid sequence, 66 residues long: Large ribosomal subunit protein uL29 (66 aa).

Belongs to the universal ribosomal protein uL29 family.

In Ruegeria pomeroyi (strain ATCC 700808 / DSM 15171 / DSS-3) (Silicibacter pomeroyi), this protein is Large ribosomal subunit protein uL29.